Reading from the N-terminus, the 108-residue chain is U-scoloptoxin(16)-Sm1a (108 aa).

The signal sequence occupies residues 1-19 (MNLFLVLFVFSFSVSQFFA).

It belongs to the scoloptoxin-16 family. Contains 4 disulfide bonds. In terms of tissue distribution, expressed by the venom gland.

The protein resides in the secreted. In Scolopendra morsitans (Tanzanian blue ringleg centipede), this protein is U-scoloptoxin(16)-Sm1a.